The sequence spans 323 residues: Prenyl transferase (323 aa).

Residues lysine 46, arginine 49, and histidine 81 each coordinate isopentenyl diphosphate. Residues aspartate 88 and aspartate 92 each coordinate Mg(2+). Arginine 97 contributes to the an all-trans-polyprenyl diphosphate binding site. Position 98 (arginine 98) interacts with isopentenyl diphosphate. An all-trans-polyprenyl diphosphate is bound by residues lysine 174, threonine 175, and glutamine 212.

This sequence belongs to the FPP/GGPP synthase family. The cofactor is Mg(2+).

The protein localises to the plastid. It localises to the cyanelle. Possible role in synthesis of the nonaprenyl side chain of plastoquinone or in synthesis of other prenyl chains such as undekaprenyl pyrophosphate. The polypeptide is Prenyl transferase (preA) (Cyanophora paradoxa).